The chain runs to 273 residues: Large ribosomal subunit protein uL2 (273 aa).

The interval 221–262 is disordered; the sequence is RGTAMNPVDHPHGGGEGRNFGKHPVTPWGVQTKGKKTRHNKR. Basic residues predominate over residues 253 to 262; sequence KGKKTRHNKR.

Belongs to the universal ribosomal protein uL2 family. As to quaternary structure, part of the 50S ribosomal subunit. Forms a bridge to the 30S subunit in the 70S ribosome.

Functionally, one of the primary rRNA binding proteins. Required for association of the 30S and 50S subunits to form the 70S ribosome, for tRNA binding and peptide bond formation. It has been suggested to have peptidyltransferase activity; this is somewhat controversial. Makes several contacts with the 16S rRNA in the 70S ribosome. The chain is Large ribosomal subunit protein uL2 from Haemophilus ducreyi (strain 35000HP / ATCC 700724).